The sequence spans 309 residues: Probable pyridoxal 5'-phosphate synthase subunit PDX1 (309 aa).

D40 is a binding site for D-ribose 5-phosphate. The Schiff-base intermediate with D-ribose 5-phosphate role is filled by K97. Residue G169 participates in D-ribose 5-phosphate binding. A D-glyceraldehyde 3-phosphate-binding site is contributed by R181. Residues G230 and 251–252 (GS) contribute to the D-ribose 5-phosphate site.

It belongs to the PdxS/SNZ family.

It catalyses the reaction aldehydo-D-ribose 5-phosphate + D-glyceraldehyde 3-phosphate + L-glutamine = pyridoxal 5'-phosphate + L-glutamate + phosphate + 3 H2O + H(+). Its pathway is cofactor biosynthesis; pyridoxal 5'-phosphate biosynthesis. Its function is as follows. Catalyzes the formation of pyridoxal 5'-phosphate from ribose 5-phosphate (RBP), glyceraldehyde 3-phosphate (G3P) and ammonia. The ammonia is provided by PDX2. Can also use ribulose 5-phosphate and dihydroxyacetone phosphate as substrates, resulting from enzyme-catalyzed isomerization of RBP and G3P, respectively. Also plays an indirect role in resistance to singlet oxygen-generating photosensitizers. The protein is Probable pyridoxal 5'-phosphate synthase subunit PDX1 (PDX1) of Ginkgo biloba (Ginkgo).